The sequence spans 363 residues: S-adenosylmethionine decarboxylase proenzyme (363 aa).

Residues Glu-9 and Glu-12 contribute to the active site. Catalysis depends on Ser-69, which acts as the Schiff-base intermediate with substrate; via pyruvic acid. Position 69 is a pyruvic acid (Ser); by autocatalysis (Ser-69). Cys-83 (proton donor; for catalytic activity) is an active-site residue. Residues Ser-232 and His-245 each act as proton acceptor; for processing activity in the active site.

Belongs to the eukaryotic AdoMetDC family. The cofactor is pyruvate. Is synthesized initially as an inactive proenzyme. Formation of the active enzyme involves a self-maturation process in which the active site pyruvoyl group is generated from an internal serine residue via an autocatalytic post-translational modification. Two non-identical subunits are generated from the proenzyme in this reaction, and the pyruvate is formed at the N-terminus of the alpha chain, which is derived from the carboxyl end of the proenzyme. The post-translation cleavage follows an unusual pathway, termed non-hydrolytic serinolysis, in which the side chain hydroxyl group of the serine supplies its oxygen atom to form the C-terminus of the beta chain, while the remainder of the serine residue undergoes an oxidative deamination to produce ammonia and the pyruvoyl group blocking the N-terminus of the alpha chain.

The catalysed reaction is S-adenosyl-L-methionine + H(+) = S-adenosyl 3-(methylsulfanyl)propylamine + CO2. Its pathway is amine and polyamine biosynthesis; S-adenosylmethioninamine biosynthesis; S-adenosylmethioninamine from S-adenosyl-L-methionine: step 1/1. The protein is S-adenosylmethionine decarboxylase proenzyme (SAMDC) of Spinacia oleracea (Spinach).